A 2801-amino-acid chain; its full sequence is Neurobeachin-like protein 2 (2801 aa).

The interval 1379–1529 is disordered; the sequence is RHEEEYEEEE…TISNTSNPQA (151 aa). The span at 1383–1393 shows a compositional bias: acidic residues; it reads EYEEEEGETQD. Polar residues-rich tracts occupy residues 1400–1413, 1424–1437, 1470–1481, and 1500–1528; these read DLSQSPPSTGQLKN, GDQSSHSSTLSNTV, KGPQTPVGSQPE, and SSSLSNVLDDTSYSTEPPTDTISNTSNPQ. The 101-residue stretch at 1986–2086 folds into the BEACH-type PH domain; sequence SQKEKLVLSE…VRNKVYSRIL (101 aa). The BEACH domain occupies 2099–2391; sequence RSPQELLKAS…QLLKEPHPPR (293 aa). 7 WD repeats span residues 2431 to 2468, 2492 to 2535, 2538 to 2575, 2588 to 2626, 2633 to 2676, 2684 to 2719, and 2727 to 2762; these read LVQAVVPRNQTRSFIIPGSDILVTVSANGMIGTHSWLP, RFLS…MLGK, LVGRICRHIDVVTCLALDLCGIYLISGSRDTTCMVWQV, RPIQVLCGHDQEVTCVAISTELDMAISGSKDGTVIVHSV, WTLR…RYAL, TLLASETLDEKISALYLVPDYLIVGTQQGNLHIRDL, and APLALKVPVRCVSVTKESSHILVGLEDGKLIVVGAG.

This sequence belongs to the WD repeat neurobeachin family.

The protein resides in the endoplasmic reticulum. In terms of biological role, involved in thrombopoiesis. Plays a role in the development or secretion of alpha-granules, that contain several growth factors important for platelet biogenesis. The polypeptide is Neurobeachin-like protein 2 (nbeal2) (Danio rerio (Zebrafish)).